A 576-amino-acid chain; its full sequence is Cilia- and flagella-associated protein 100 (576 aa).

The segment at 1–29 is disordered; the sequence is MPIYDEASVPGTAAGRSTTDVGATAGANP. 3 coiled-coil regions span residues 125 to 226, 254 to 311, and 342 to 408; these read IFLL…CRRY, VAEW…IMKE, and YKQL…LKDR. 3 disordered regions span residues 417–439, 495–519, and 538–563; these read TLSM…PGGP, AEKA…HREH, and TGKP…RNDE.

This sequence belongs to the CFAP100 family. Interacts with FAP73; form the modifier of inner arm (MIA) complex.

The protein resides in the cytoplasm. It is found in the cytoskeleton. The protein localises to the flagellum axoneme. Its function is as follows. As part of MIA, a complex associated with the outer doublet microtubules of the axoneme, may play a role in ciliary/flagellar motility by regulating the assembly and the activity of axonemal inner dynein arm. This Chlamydomonas reinhardtii (Chlamydomonas smithii) protein is Cilia- and flagella-associated protein 100.